The chain runs to 424 residues: UPF0229 protein Sde_0732 (424 aa).

The segment at 52-109 (IGIPSKDISEPVFHHDSGGVDTRVLPGNDQFHSGDRIQRPPSGQGGGGSGKGASDSGE) is disordered. Residues 58–69 (DISEPVFHHDSG) are compositionally biased toward basic and acidic residues.

This sequence belongs to the UPF0229 family.

This Saccharophagus degradans (strain 2-40 / ATCC 43961 / DSM 17024) protein is UPF0229 protein Sde_0732.